The following is an 89-amino-acid chain: Teretoxin Tan22.12 (89 aa).

The first 22 residues, 1 to 22 (MKVLFTLAMIVVTLCLGQRMRR), serve as a signal peptide directing secretion.

Belongs to the teretoxin C (TC) superfamily. In terms of processing, contains 4 disulfide bonds. Expressed by the venom duct.

Its subcellular location is the secreted. This chain is Teretoxin Tan22.12, found in Terebra anilis (Auger snail).